Reading from the N-terminus, the 65-residue chain is Large ribosomal subunit protein uL30 (65 aa).

The protein belongs to the universal ribosomal protein uL30 family. As to quaternary structure, part of the 50S ribosomal subunit.

The sequence is that of Large ribosomal subunit protein uL30 from Desulfosudis oleivorans (strain DSM 6200 / JCM 39069 / Hxd3) (Desulfococcus oleovorans).